A 2939-amino-acid chain; its full sequence is Serine/threonine-protein kinase tel1 (2939 aa).

Disordered stretches follow at residues 193–212, 695–718, and 859–886; these read GTSVRASPAPGTPATSRAGS, PPEDSHKATSTDQPKREEIRAADS, and KTRRESPTDSDPASMDLDDEFDSQETRK. Basic and acidic residues predominate over residues 697–715; the sequence is EDSHKATSTDQPKREEIRA. In terms of domain architecture, FAT spans 1869 to 2471; sequence IAAAAATRCG…MYQIWSGVKA (603 aa). The 314-residue stretch at 2577–2890 folds into the PI3K/PI4K catalytic domain; that stretch reads FEPQMSIASG…DKKSTKNLNE (314 aa). The tract at residues 2583-2589 is G-loop; that stretch reads IASGVSA. A catalytic loop region spans residues 2755–2763; sequence GLGDRHGHN. The interval 2775–2799 is activation loop; that stretch reads HIDLGVAFELGRILPVPELVPFRLT. The disordered stretch occupies residues 2869–2894; the sequence is DVVEAEDERRAGDKKSTKNLNEPSEA. Residues 2875-2884 show a composition bias toward basic and acidic residues; that stretch reads DERRAGDKKS. Positions 2907–2939 constitute an FATC domain; the sequence is KTLSVMATVNDLINQATDERNLAVLFCGWAAYA.

This sequence belongs to the PI3/PI4-kinase family. ATM subfamily. As to quaternary structure, associates with DNA double-strand breaks.

It is found in the nucleus. Its subcellular location is the chromosome. The protein localises to the telomere. It carries out the reaction L-seryl-[protein] + ATP = O-phospho-L-seryl-[protein] + ADP + H(+). The enzyme catalyses L-threonyl-[protein] + ATP = O-phospho-L-threonyl-[protein] + ADP + H(+). In terms of biological role, serine/threonine protein kinase which activates checkpoint signaling upon genotoxic stresses such as ionizing radiation (IR), ultraviolet light (UV), or DNA replication stalling, thereby acting as a DNA damage sensor. Recognizes the substrate consensus sequence [ST]-Q. Phosphorylates histone H2A to form H2AS128ph (gamma-H2A) at sites of DNA damage, involved in the regulation of DNA damage response mechanism. Required for the control of telomere length and genome stability. The sequence is that of Serine/threonine-protein kinase tel1 (mus-21) from Neurospora crassa (strain ATCC 24698 / 74-OR23-1A / CBS 708.71 / DSM 1257 / FGSC 987).